The chain runs to 270 residues: MNYYFTKGKPQLVNMKTPIYLVTQFQQLMDLMQNQYEVSCLELMQRSGKAACDFLVYRWPKVKKISIFCGRGDNGGQGYVLAQQAKKMGMVPTVWQVGHQMSMSKPPQMHKEVWYEMNSCHQQGIVLHTYSPDIDLGDPELIVDALFGVGLYGHVRPEIALLLQRLQQFTVPILAIEVPTGINASTGEIAGNALAATATITFLCMKLGLLINDGKIYSGEIAFDDLLAPEAIYQQVKGIEESSLLDSSTFFSKKIWYRNKTQKGWQLSIN.

The region spanning Phe25 to Gln234 is the YjeF N-terminal domain. Asp73–Gln77 serves as a coordination point for (6S)-NADPHX. Positions 74 and 144 each coordinate K(+). Residues Gly148–His154 and Glu177 each bind (6S)-NADPHX. Thr180 provides a ligand contact to K(+).

Belongs to the NnrE/AIBP family. K(+) is required as a cofactor.

It carries out the reaction (6R)-NADHX = (6S)-NADHX. It catalyses the reaction (6R)-NADPHX = (6S)-NADPHX. Functionally, catalyzes the epimerization of the S- and R-forms of NAD(P)HX, a damaged form of NAD(P)H that is a result of enzymatic or heat-dependent hydration. This is a prerequisite for the S-specific NAD(P)H-hydrate dehydratase to allow the repair of both epimers of NAD(P)HX. The protein is NAD(P)H-hydrate epimerase of Legionella pneumophila serogroup 1 (strain 2300/99 Alcoy).